A 259-amino-acid chain; its full sequence is Small ribosomal subunit protein uS2 (259 aa).

The interval 232 to 259 (KAMEAEETKAAEKAVETEAKEETPQEAK) is disordered.

It belongs to the universal ribosomal protein uS2 family.

The polypeptide is Small ribosomal subunit protein uS2 (Maridesulfovibrio salexigens (strain ATCC 14822 / DSM 2638 / NCIMB 8403 / VKM B-1763) (Desulfovibrio salexigens)).